A 310-amino-acid polypeptide reads, in one-letter code: Inner membrane protein YfdC (310 aa).

Basic and acidic residues predominate over residues 1 to 12 (MDNDKIDQHSDE). A disordered region spans residues 1-27 (MDNDKIDQHSDEIEVESEEKERGKKIE). The Cytoplasmic portion of the chain corresponds to 1 to 58 (MDNDKIDQHSDEIEVESEEKERGKKIEIDEDRLPSRAMAIHEHIRQDGEKELERDAMA). A helical transmembrane segment spans residues 59 to 81 (LLWSAIAAGLSMGASLLAKGIFQ). Topologically, residues 82 to 90 (VELEGVPGS) are periplasmic. A helical membrane pass occupies residues 91–113 (FLLENLGYTFGFIIVIMARQQLF). The Cytoplasmic portion of the chain corresponds to 114-133 (TENTVTAVLPVMQKPTMSNV). Residues 134–156 (GLLIRLWGVVLLGNILGTGIAAW) form a helical membrane-spanning segment. At 157–186 (AFEYMPIFNEETRDAFVKIGMDVMKNTPSE) the chain is on the periplasmic side. Residues 187-206 (MFANAIISGWLIATMVWMFP) traverse the membrane as a helical segment. Topologically, residues 207–212 (AAGAAK) are cytoplasmic. The helical transmembrane segment at 213 to 232 (IVVIILMTWLIALGDTTHIV) threads the bilayer. Residues 233–251 (VGSVEILYLVFNGTLHWSD) lie on the Periplasmic side of the membrane. Residues 252-274 (FIWPFALPTLAGNICGGTFIFAL) traverse the membrane as a helical segment. The Cytoplasmic portion of the chain corresponds to 275–310 (MSHAQIRNDMSNKRKAEARQKAERAENIKKNYKNPA). Residues 291-303 (EARQKAERAENIK) are compositionally biased toward basic and acidic residues. The segment at 291 to 310 (EARQKAERAENIKKNYKNPA) is disordered.

The protein resides in the cell inner membrane. This Escherichia coli (strain K12) protein is Inner membrane protein YfdC (yfdC).